A 140-amino-acid chain; its full sequence is Histone H2B.1, sperm (140 aa).

Positions 1 to 47 (MPSQRSPTKRSPTKRSPQKGAGKGGKGSKRGGKARRRGGAAVRRRRR) are disordered. Short sequence motifs (SPKK motif) lie at residues 6–9 (SPTK), 11–14 (SPTK), and 16–19 (SPQK). Basic residues-rich tracts occupy residues 7–17 (PTKRSPTKRSP) and 26–47 (KGSK…RRRR). S11 and S16 each carry phosphoserine. O-linked (GlcNAc) serine glycosylation is present at S127. K135 is covalently cross-linked (Glycyl lysine isopeptide (Lys-Gly) (interchain with G-Cter in ubiquitin)).

The protein belongs to the histone H2B family. In terms of assembly, the nucleosome is a histone octamer containing two molecules each of H2A, H2B, H3 and H4 assembled in one H3-H4 heterotetramer and two H2A-H2B heterodimers. The octamer wraps approximately 147 bp of DNA. Post-translationally, monoubiquitination of Lys-135 gives a specific tag for epigenetic transcriptional activation and is also prerequisite for histone H3 'Lys-4' and 'Lys-79' methylation. Phosphorylated on SPKK motifs 2 and 3; which may regulate DNA binding. Dephosphorylated during maturation of spermatids to mature sperm and rephosphorylated at fertilization. In terms of processing, glcNAcylation at Ser-127 promotes monoubiquitination of Lys-135. It fluctuates in response to extracellular glucose, and associates with transcribed genes.

It localises to the nucleus. It is found in the chromosome. Functionally, core component of nucleosome. Nucleosomes wrap and compact DNA into chromatin, limiting DNA accessibility to the cellular machineries which require DNA as a template. Histones thereby play a central role in transcription regulation, DNA repair, DNA replication and chromosomal stability. DNA accessibility is regulated via a complex set of post-translational modifications of histones, also called histone code, and nucleosome remodeling. This chain is Histone H2B.1, sperm, found in Strongylocentrotus purpuratus (Purple sea urchin).